Reading from the N-terminus, the 126-residue chain is Prefoldin subunit beta (126 aa).

This sequence belongs to the prefoldin subunit beta family. In terms of assembly, heterohexamer of two alpha and four beta subunits.

The protein localises to the cytoplasm. Its function is as follows. Molecular chaperone capable of stabilizing a range of proteins. Seems to fulfill an ATP-independent, HSP70-like function in archaeal de novo protein folding. This chain is Prefoldin subunit beta, found in Methanocella arvoryzae (strain DSM 22066 / NBRC 105507 / MRE50).